The chain runs to 168 residues: Large ribosomal subunit protein uL24 (168 aa).

The disordered stretch occupies residues 112-168; that stretch reads LEGKDPRKQPKEAPKAAEKPAKEEPKKETPKAEEKPAKEEPKETKVEKKSEEKEDEN.

This sequence belongs to the universal ribosomal protein uL24 family. Part of the 50S ribosomal subunit.

Functionally, one of two assembly initiator proteins, it binds directly to the 5'-end of the 23S rRNA, where it nucleates assembly of the 50S subunit. In terms of biological role, located at the polypeptide exit tunnel on the outside of the subunit. This is Large ribosomal subunit protein uL24 from Nitrosopumilus maritimus (strain SCM1).